The following is a 266-amino-acid chain: Dioicin-2 (266 aa).

2 disulfide bridges follow: Cys-32/Cys-263 and Cys-85/Cys-102. Residue Glu-176 is part of the active site.

The protein resides in the secreted. Its subcellular location is the extracellular space. It is found in the golgi apparatus. It localises to the vacuole. It carries out the reaction Endohydrolysis of the N-glycosidic bond at one specific adenosine on the 28S rRNA.. Nicks pBR322 dsDNA. Has adenine polynucleotide glycosidase activity on herring sperm ssDNA. The sequence is that of Dioicin-2 from Phytolacca dioica (Bella sombra tree).